A 249-amino-acid chain; its full sequence is Zinc import ATP-binding protein ZnuC (249 aa).

Residues 1-219 (MRLVSLRNAT…PEYQALFGSG (219 aa)) form the ABC transporter domain. Position 36–43 (36–43 (GPNGSGKS)) interacts with ATP.

Belongs to the ABC transporter superfamily. Zinc importer (TC 3.A.1.15.5) family. As to quaternary structure, the complex is composed of two ATP-binding proteins (ZnuC), two transmembrane proteins (ZnuB) and a solute-binding protein (ZnuA).

It is found in the cell inner membrane. The catalysed reaction is Zn(2+)(out) + ATP(in) + H2O(in) = Zn(2+)(in) + ADP(in) + phosphate(in) + H(+)(in). Part of the ABC transporter complex ZnuABC involved in zinc import. Responsible for energy coupling to the transport system. The polypeptide is Zinc import ATP-binding protein ZnuC (Ruegeria sp. (strain TM1040) (Silicibacter sp.)).